We begin with the raw amino-acid sequence, 359 residues long: Protein Wnt-5a (359 aa).

An N-terminal signal peptide occupies residues 1–20 (MASRYLTLAAALLASFLQVD). Cys-83 and Cys-94 are oxidised to a cystine. 2 N-linked (GlcNAc...) asparagine glycosylation sites follow: Asn-93 and Asn-99. Cystine bridges form between Cys-133–Cys-141, Cys-143–Cys-161, Cys-217–Cys-231, Cys-219–Cys-226, Cys-288–Cys-319, Cys-304–Cys-314, Cys-318–Cys-358, Cys-334–Cys-349, Cys-336–Cys-346, and Cys-341–Cys-342. Ser-223 carries O-palmitoleoyl serine; by PORCN lipidation. N-linked (GlcNAc...) asparagine glycans are attached at residues Asn-291 and Asn-305.

This sequence belongs to the Wnt family. Post-translationally, palmitoleoylation is required for efficient binding to frizzled receptors. Depalmitoleoylation leads to Wnt signaling pathway inhibition.

Its subcellular location is the secreted. It is found in the extracellular space. It localises to the extracellular matrix. Its function is as follows. Ligand for members of the frizzled family of seven transmembrane receptors. Can activate or inhibit canonical Wnt signaling, depending on receptor context. Required during embryogenesis for extension of the primary anterior-posterior axis. In Pleurodeles waltl (Iberian ribbed newt), this protein is Protein Wnt-5a (WNT5A).